The following is a 490-amino-acid chain: Alginate production protein AlgE (490 aa).

An N-terminal signal peptide occupies residues 1 to 32 (MNSSRSVNPRPSFAPRALSLAIALLLGAPAFA). Composition is skewed to polar residues over residues 102–115 (DTLQSDTDDGNNSR) and 343–355 (QFQQTGLESNRSN). 2 disordered regions span residues 102-121 (DTLQSDTDDGNNSRNDGREP) and 331-355 (ARGSGGGKDGEEQFQQTGLESNRSN).

Belongs to the AlgE family.

The protein localises to the cell outer membrane. The protein operates within glycan biosynthesis; alginate biosynthesis. Its function is as follows. Has non-porin-like, channel-forming properties and probably functions as an alginate permeability pore. In Pseudomonas aeruginosa (strain ATCC 15692 / DSM 22644 / CIP 104116 / JCM 14847 / LMG 12228 / 1C / PRS 101 / PAO1), this protein is Alginate production protein AlgE (algE).